A 196-amino-acid chain; its full sequence is 3-isopropylmalate dehydratase small subunit (196 aa).

It belongs to the LeuD family. LeuD type 1 subfamily. In terms of assembly, heterodimer of LeuC and LeuD.

It catalyses the reaction (2R,3S)-3-isopropylmalate = (2S)-2-isopropylmalate. It participates in amino-acid biosynthesis; L-leucine biosynthesis; L-leucine from 3-methyl-2-oxobutanoate: step 2/4. In terms of biological role, catalyzes the isomerization between 2-isopropylmalate and 3-isopropylmalate, via the formation of 2-isopropylmaleate. This is 3-isopropylmalate dehydratase small subunit from Rhodopirellula baltica (strain DSM 10527 / NCIMB 13988 / SH1).